We begin with the raw amino-acid sequence, 738 residues long: Nucleoprotein (738 aa).

The stretch at Val-334–Leu-363 forms a coiled coil. Residues Gly-418 to Ile-640 are disordered. Acidic residues predominate over residues Pro-461 to Ala-476. The span at Pro-544–Pro-564 shows a compositional bias: polar residues. A compositionally biased stretch (acidic residues) spans Glu-567 to Glu-594. Over residues Val-616–Ser-625 the composition is skewed to polar residues.

The protein belongs to the filoviruses nucleoprotein family. As to quaternary structure, homooligomer. Homomultimerizes to form the nucleocapsid. Binds to viral genomic RNA. Interacts with VP35 and VP30 to form the nucleocapsid. Interacts with host PPP2R5C; this interaction leads to VP30 dephosphorylation and viral transcription. Interacts with VP24; this interaction facilitates nucleocapsid assembly and genome packaging. Interacts with matrix protein VP40; this interaction allows recruitment of the nucleocapsid into progeny virions. Interacts with host STAU1. Interacts with host NXF1 (via RNA-binding domain); this interaction recruits NXF1 to the inclusion bodies were viral replication takes place, probably to export viral mRNA-NXF1 complexes from these sites. Interacts with host CCDC92; this interaction sequesters NP in the host cytoplasm. Interacts with host TRIM14. Post-translationally, phosphorylated and O-glycosylated by host. Acetylated by host EP300 in vitro.

It is found in the virion. The protein localises to the host cytoplasm. In terms of biological role, oligomerizes into helical capsid to encapsidate the viral genome, protecting it from nucleases and the cellular innate immune response. VP35 binds to and stabilizes monomeric NP, keeping it soluble. Upon virus replication, NP is recruited to bind cooperatively viral genomic RNA and VP35 is released. The encapsidated genomic RNA is termed the nucleocapsid and serves as template for transcription and replication. The nucleocapsid is helical with a pitch of 10.81 NP per turn and a diameter of about 22nm. Each NP binds to six nucleotides of viral genomic RNA, three being exposed to the solvant and three hidden into the nucleocapsid. Also recruits host PPP2R5C phosphatase to dephosphorylate VP30 and thereby promote viral transcription. Upon virion assembly and budding, NP binds to VP24 and possibly host STAU1. The polypeptide is Nucleoprotein (NP) (Sudan ebolavirus (strain Human/Uganda/Gulu/2000) (SEBOV)).